The sequence spans 173 residues: Peptidoglycan-associated lipoprotein (173 aa).

A signal peptide spans 1–21 (MKSKKIFKILTLLLPMITTFS). A lipid anchor (N-palmitoyl cysteine) is attached at cysteine 22. Cysteine 22 is lipidated: S-diacylglycerol cysteine. One can recognise an OmpA-like domain in the interval 59 to 173 (ETLEKLKKGN…KNRRSVIIYQ (115 aa)).

Belongs to the Pal lipoprotein family.

Its subcellular location is the cell outer membrane. This Buchnera aphidicola subsp. Baizongia pistaciae (strain Bp) protein is Peptidoglycan-associated lipoprotein.